Reading from the N-terminus, the 357-residue chain is S-adenosyl-L-methionine:benzoic acid/salicylic acid carboxyl methyltransferase 1 (357 aa).

Tyrosine 18 is an S-adenosyl-L-homocysteine binding site. Glutamine 25 serves as a coordination point for benzoate. 6 residues coordinate S-adenosyl-L-homocysteine: cysteine 59, asparagine 64, aspartate 96, leucine 97, serine 135, and phenylalanine 136. A benzoate-binding site is contributed by tryptophan 157. Mg(2+)-binding residues include asparagine 168, aspartate 254, phenylalanine 256, and asparagine 257. Glutamine 260 lines the benzoate pocket.

The protein belongs to the methyltransferase superfamily. Type-7 methyltransferase family. As to expression, predominantly expressed in petal limbs and tubes of corollas.

It catalyses the reaction benzoate + S-adenosyl-L-methionine = methyl benzoate + S-adenosyl-L-homocysteine. The catalysed reaction is salicylate + S-adenosyl-L-methionine = methyl salicylate + S-adenosyl-L-homocysteine. The protein operates within aromatic compound metabolism. Converts benzoic acid into the volatile ester methyl benzoates. This scent, mostly produced in a rhythmical, diurnal manner, attracts the pollinators. The polypeptide is S-adenosyl-L-methionine:benzoic acid/salicylic acid carboxyl methyltransferase 1 (Petunia hybrida (Petunia)).